A 652-amino-acid chain; its full sequence is DNA ligase (652 aa).

NAD(+) is bound by residues 29-33 (DSDYD), 78-79 (SL), and Glu107. Lys109 acts as the N6-AMP-lysine intermediate in catalysis. NAD(+)-binding residues include Arg130, Glu164, Lys278, and Lys302. Residues Cys395, Cys398, Cys413, and Cys418 each contribute to the Zn(2+) site. Residues 577–652 (NSDAALFGLT…IEDEDWLRQL (76 aa)) form the BRCT domain.

The protein belongs to the NAD-dependent DNA ligase family. LigA subfamily. The cofactor is Mg(2+). Requires Mn(2+) as cofactor.

The catalysed reaction is NAD(+) + (deoxyribonucleotide)n-3'-hydroxyl + 5'-phospho-(deoxyribonucleotide)m = (deoxyribonucleotide)n+m + AMP + beta-nicotinamide D-nucleotide.. DNA ligase that catalyzes the formation of phosphodiester linkages between 5'-phosphoryl and 3'-hydroxyl groups in double-stranded DNA using NAD as a coenzyme and as the energy source for the reaction. It is essential for DNA replication and repair of damaged DNA. The sequence is that of DNA ligase from Streptococcus pyogenes serotype M12 (strain MGAS2096).